We begin with the raw amino-acid sequence, 47 residues long: Turripeptide Ici9.1 (47 aa).

Intrachain disulfides connect Cys-1-Cys-31, Cys-5-Cys-24, and Cys-13-Cys-45. Positions 1–47 (CLSVCSMEYWPVCGSDGKTYPNECHLTSEACMSNTDITVAHVGKCDQ) constitute a Kazal-like domain.

It belongs to the conopeptide P-like superfamily. Expressed by the venom duct.

The protein localises to the secreted. Functionally, acts as a neurotoxin by inhibiting an ion channel. May also act as a serine protease inhibitor, since it possess the kazal serine protease inhibitor signature. The polypeptide is Turripeptide Ici9.1 (Iotyrris cingulifera (Sea snail)).